Reading from the N-terminus, the 465-residue chain is UDP-N-acetylmuramate--L-alanine ligase (465 aa).

Position 112–118 (112–118) interacts with ATP; sequence GTHGKTT.

The protein belongs to the MurCDEF family.

It is found in the cytoplasm. The catalysed reaction is UDP-N-acetyl-alpha-D-muramate + L-alanine + ATP = UDP-N-acetyl-alpha-D-muramoyl-L-alanine + ADP + phosphate + H(+). The protein operates within cell wall biogenesis; peptidoglycan biosynthesis. In terms of biological role, cell wall formation. The polypeptide is UDP-N-acetylmuramate--L-alanine ligase (Burkholderia mallei (strain NCTC 10247)).